Here is a 249-residue protein sequence, read N- to C-terminus: MPAAWPPRTVIRKSSGLRTLESALYRAGLGPVAGVDEVGRGACAGPLVVAACVLGPNRLESLAALDDSKKLNENERERLFPLIRRYALAYHVVFIPSQEVDRRGVHVANIEGMRRAVAGLSLRPGYVLSDGFRVPGLPMPSLPVVGGDAAAACIAAASVLAKVSRDRLMVAMEDEHPGYGFAEHKGYSTRAHSAALARLGPSSQHRYSFINVRRLVMDGEPEEHGEVGCGKMLVDMPVDGVLHEGQLSR.

One can recognise an RNase H type-2 domain in the interval 30–221 (GPVAGVDEVG…VRRLVMDGEP (192 aa)). A divalent metal cation-binding residues include Asp36, Glu37, and Asp130.

It belongs to the RNase HII family. It depends on Mn(2+) as a cofactor. Mg(2+) is required as a cofactor.

Its subcellular location is the cytoplasm. The catalysed reaction is Endonucleolytic cleavage to 5'-phosphomonoester.. In terms of biological role, endonuclease that specifically degrades the RNA of RNA-DNA hybrids. The chain is Ribonuclease HII from Mycolicibacterium vanbaalenii (strain DSM 7251 / JCM 13017 / BCRC 16820 / KCTC 9966 / NRRL B-24157 / PYR-1) (Mycobacterium vanbaalenii).